The following is a 320-amino-acid chain: MPMYQVKPYHGGGAPLRVELPTCMYRLPNVHGRSYGPAPGAGHVQEESNLSLQALESRQDDILKRLYELKAAVDGLSKMIQTPDADLDVTNIIQADEPTTLTTNALDLNSVLGKDYGALKDIVINANPASPPLSLLVLHRLLCEHFRVLSTVHTHSSVKSVPENLLKCFGEQNKKQPRQDYQLGFTLIWKNVPKTQMKFSIQTMCPIEGEGNIARFLFSLFGQKHNAVNATLIDSWVDIAIFQLKEGSSKEKAAVFRSMNSALGKSPWLAGNELTVADVVLWSVLQQIGGCSVTVPANVQRWMRSCENLAPFNTALKLLK.

Residues 82–162 (TPDADLDVTN…HTHSSVKSVP (81 aa)) form an interaction with PRKN region. Residues 162-225 (PENLLKCFGE…FLFSLFGQKH (64 aa)) are interaction with TP53. A GST C-terminal domain is found at 220 to 317 (LFGQKHNAVN…NLAPFNTALK (98 aa)).

As to quaternary structure, part of the multisynthetase complex (MSC), a multisubunit complex that groups tRNA ligases for Arg (RARS1), Asp (DARS1), Gln (QARS1), Ile (IARS1), Leu (LARS1), Lys (KARS1), Met (MARS1) the bifunctional ligase for Glu and Pro (EPRS1) and the auxiliary subunits AIMP1/p43, AIMP2/p38 and EEF1E1/p18. Interacts (via N-terminus) with KARS1. Interacts with EPRS1. Forms a linear complex that contains MARS1, EEF1E1, EPRS1 and AIMP2 that is at the core of the multisubunit complex. Binds FUBP1 (via C-terminus). Interacts in both its unphosphorylated and phosphorylated forms with p53/TP53 (via N-terminus) in the nucleus following UV irradiation. Interacts (via N-terminus) with PRKN/parkin (via first RING-type domain). Interacts with TARS3. In terms of processing, phosphorylated on serine residues in response to UV irradiation. Ubiquitinated by PRKN, leading to its degradation by the proteasome. Mutant PRKN fails to ubiquitinate AIMP2 efficiently, allowing its accumulation which may contribute to neurodegeneration associated with Parkinson disease.

Its subcellular location is the cytoplasm. It is found in the cytosol. The protein localises to the nucleus. Required for assembly and stability of the aminoacyl-tRNA synthase complex. Mediates ubiquitination and degradation of FUBP1, a transcriptional activator of MYC, leading to MYC down-regulation which is required for aveolar type II cell differentiation. Blocks MDM2-mediated ubiquitination and degradation of p53/TP53. Functions as a proapoptotic factor. The protein is Aminoacyl tRNA synthase complex-interacting multifunctional protein 2 (AIMP2) of Homo sapiens (Human).